The sequence spans 88 residues: MADVLVSFKLLPSDSDVDTSVMESEVKEKLNGVCKINNIEEKDIGFGLKYIHLEVIVEDKEGEVDRIEKVLSMVKGVGEINTENVSLI.

Belongs to the EF-1-beta/EF-1-delta family.

Functionally, promotes the exchange of GDP for GTP in EF-1-alpha/GDP, thus allowing the regeneration of EF-1-alpha/GTP that could then be used to form the ternary complex EF-1-alpha/GTP/AAtRNA. This Thermoplasma volcanium (strain ATCC 51530 / DSM 4299 / JCM 9571 / NBRC 15438 / GSS1) protein is Elongation factor 1-beta (ef1b).